The primary structure comprises 670 residues: UvrABC system protein B (670 aa).

A Helicase ATP-binding domain is found at 26 to 183 (EGLENGLAHQ…RRLSELQYSR (158 aa)). 39 to 46 (GVTGSGKT) contributes to the ATP binding site. Residues 92-115 (YYDYYQPEAYVPSSDTFIEKDASV) carry the Beta-hairpin motif. Residues 431–597 (QVDDLLSEIR…GLNKKIGDIL (167 aa)) enclose the Helicase C-terminal domain. Positions 600 to 620 (GQPSTRGKGKGRGGKVADTNN) are disordered. Residues 630–665 (DQKIRELEAKMYTHAQNLEFEQAAELRDQVHQLRQQ) form the UVR domain.

Belongs to the UvrB family. Forms a heterotetramer with UvrA during the search for lesions. Interacts with UvrC in an incision complex.

The protein resides in the cytoplasm. Its function is as follows. The UvrABC repair system catalyzes the recognition and processing of DNA lesions. A damage recognition complex composed of 2 UvrA and 2 UvrB subunits scans DNA for abnormalities. Upon binding of the UvrA(2)B(2) complex to a putative damaged site, the DNA wraps around one UvrB monomer. DNA wrap is dependent on ATP binding by UvrB and probably causes local melting of the DNA helix, facilitating insertion of UvrB beta-hairpin between the DNA strands. Then UvrB probes one DNA strand for the presence of a lesion. If a lesion is found the UvrA subunits dissociate and the UvrB-DNA preincision complex is formed. This complex is subsequently bound by UvrC and the second UvrB is released. If no lesion is found, the DNA wraps around the other UvrB subunit that will check the other stand for damage. This is UvrABC system protein B from Yersinia enterocolitica serotype O:8 / biotype 1B (strain NCTC 13174 / 8081).